A 194-amino-acid polypeptide reads, in one-letter code: Mu-like prophage FluMu protein gp37 (194 aa).

The protein to phage Mu protein gp37.

The chain is Mu-like prophage FluMu protein gp37 from Haemophilus influenzae (strain ATCC 51907 / DSM 11121 / KW20 / Rd).